The chain runs to 340 residues: Phosphoribosylformylglycinamidine cyclo-ligase (340 aa).

The protein belongs to the AIR synthase family.

It is found in the cytoplasm. It carries out the reaction 2-formamido-N(1)-(5-O-phospho-beta-D-ribosyl)acetamidine + ATP = 5-amino-1-(5-phospho-beta-D-ribosyl)imidazole + ADP + phosphate + H(+). Its pathway is purine metabolism; IMP biosynthesis via de novo pathway; 5-amino-1-(5-phospho-D-ribosyl)imidazole from N(2)-formyl-N(1)-(5-phospho-D-ribosyl)glycinamide: step 2/2. The chain is Phosphoribosylformylglycinamidine cyclo-ligase from Streptococcus pneumoniae (strain 70585).